Reading from the N-terminus, the 196-residue chain is Pyridoxal 5'-phosphate synthase subunit PdxT (196 aa).

52–54 (GES) lines the L-glutamine pocket. Cys-84 acts as the Nucleophile in catalysis. L-glutamine-binding positions include Arg-113 and 141 to 142 (IR). Catalysis depends on charge relay system residues His-178 and Glu-180.

This sequence belongs to the glutaminase PdxT/SNO family. In the presence of PdxS, forms a dodecamer of heterodimers. Only shows activity in the heterodimer.

It carries out the reaction aldehydo-D-ribose 5-phosphate + D-glyceraldehyde 3-phosphate + L-glutamine = pyridoxal 5'-phosphate + L-glutamate + phosphate + 3 H2O + H(+). The enzyme catalyses L-glutamine + H2O = L-glutamate + NH4(+). It participates in cofactor biosynthesis; pyridoxal 5'-phosphate biosynthesis. Catalyzes the hydrolysis of glutamine to glutamate and ammonia as part of the biosynthesis of pyridoxal 5'-phosphate. The resulting ammonia molecule is channeled to the active site of PdxS. This Pyrococcus horikoshii (strain ATCC 700860 / DSM 12428 / JCM 9974 / NBRC 100139 / OT-3) protein is Pyridoxal 5'-phosphate synthase subunit PdxT.